The following is a 156-amino-acid chain: Large ribosomal subunit protein uL15 (156 aa).

A compositionally biased stretch (basic and acidic residues) spans 1 to 13; it reads MKLNEIKDNEGAT. Positions 1 to 41 are disordered; sequence MKLNEIKDNEGATKNRKRLGRGIGSGSGKTAGRGVKGQKAR. Residues 21 to 35 are compositionally biased toward gly residues; it reads RGIGSGSGKTAGRGV.

The protein belongs to the universal ribosomal protein uL15 family. As to quaternary structure, part of the 50S ribosomal subunit.

Its function is as follows. Binds to the 23S rRNA. In Sinorhizobium medicae (strain WSM419) (Ensifer medicae), this protein is Large ribosomal subunit protein uL15.